A 155-amino-acid polypeptide reads, in one-letter code: SsrA-binding protein (155 aa).

A compositionally biased stretch (basic and acidic residues) spans 135 to 147; sequence TIKRRDQERDIKK. The segment at 135–155 is disordered; it reads TIKRRDQERDIKKQMKHYNAR.

It belongs to the SmpB family.

It is found in the cytoplasm. Required for rescue of stalled ribosomes mediated by trans-translation. Binds to transfer-messenger RNA (tmRNA), required for stable association of tmRNA with ribosomes. tmRNA and SmpB together mimic tRNA shape, replacing the anticodon stem-loop with SmpB. tmRNA is encoded by the ssrA gene; the 2 termini fold to resemble tRNA(Ala) and it encodes a 'tag peptide', a short internal open reading frame. During trans-translation Ala-aminoacylated tmRNA acts like a tRNA, entering the A-site of stalled ribosomes, displacing the stalled mRNA. The ribosome then switches to translate the ORF on the tmRNA; the nascent peptide is terminated with the 'tag peptide' encoded by the tmRNA and targeted for degradation. The ribosome is freed to recommence translation, which seems to be the essential function of trans-translation. The protein is SsrA-binding protein of Streptococcus pyogenes serotype M3 (strain SSI-1).